Here is a 230-residue protein sequence, read N- to C-terminus: Orotidine 5'-phosphate decarboxylase (230 aa).

Substrate-binding positions include Asp-10, Lys-31, 58 to 67 (DLKLHDIPNT), Thr-117, Arg-179, Gln-188, Gly-208, and Arg-209. Catalysis depends on Lys-60, which acts as the Proton donor.

It belongs to the OMP decarboxylase family. Type 1 subfamily. In terms of assembly, homodimer.

It carries out the reaction orotidine 5'-phosphate + H(+) = UMP + CO2. It participates in pyrimidine metabolism; UMP biosynthesis via de novo pathway; UMP from orotate: step 2/2. Functionally, catalyzes the decarboxylation of orotidine 5'-monophosphate (OMP) to uridine 5'-monophosphate (UMP). The polypeptide is Orotidine 5'-phosphate decarboxylase (Staphylococcus epidermidis (strain ATCC 35984 / DSM 28319 / BCRC 17069 / CCUG 31568 / BM 3577 / RP62A)).